A 164-amino-acid chain; its full sequence is Ion-translocating oxidoreductase complex subunit G (164 aa).

Position 125 is an FMN phosphoryl threonine (Thr125).

Belongs to the RnfG family. In terms of assembly, the complex is composed of six subunits: RnfA, RnfB, RnfC, RnfD, RnfE and RnfG. It depends on FMN as a cofactor.

Functionally, part of a membrane-bound complex that couples electron transfer with translocation of ions across the membrane. The chain is Ion-translocating oxidoreductase complex subunit G from Buchnera aphidicola subsp. Acyrthosiphon pisum (strain APS) (Acyrthosiphon pisum symbiotic bacterium).